A 97-amino-acid chain; its full sequence is Co-chaperonin GroES (97 aa).

The protein belongs to the GroES chaperonin family. Heptamer of 7 subunits arranged in a ring. Interacts with the chaperonin GroEL.

It localises to the cytoplasm. Together with the chaperonin GroEL, plays an essential role in assisting protein folding. The GroEL-GroES system forms a nano-cage that allows encapsulation of the non-native substrate proteins and provides a physical environment optimized to promote and accelerate protein folding. GroES binds to the apical surface of the GroEL ring, thereby capping the opening of the GroEL channel. The sequence is that of Co-chaperonin GroES from Yersinia enterocolitica serotype O:8 / biotype 1B (strain NCTC 13174 / 8081).